Here is a 100-residue protein sequence, read N- to C-terminus: MLEHILSLGAYLFCIGIFGLITSRNMVRALMCLELIFNAVNINLITFSNSFDTQQAKGEIFAIFIIAIAAAEAAIGLAIVLAIYRNKNSTRIDQFNLLKW.

A run of 3 helical transmembrane segments spans residues 1–21 (MLEHILSLGAYLFCIGIFGLI), 29–49 (ALMCLELIFNAVNINLITFSN), and 60–80 (IFAIFIIAIAAAEAAIGLAIV).

It belongs to the complex I subunit 4L family. NDH is composed of at least 16 different subunits, 5 of which are encoded in the nucleus.

The protein localises to the plastid. It is found in the chloroplast thylakoid membrane. The catalysed reaction is a plastoquinone + NADH + (n+1) H(+)(in) = a plastoquinol + NAD(+) + n H(+)(out). The enzyme catalyses a plastoquinone + NADPH + (n+1) H(+)(in) = a plastoquinol + NADP(+) + n H(+)(out). In terms of biological role, NDH shuttles electrons from NAD(P)H:plastoquinone, via FMN and iron-sulfur (Fe-S) centers, to quinones in the photosynthetic chain and possibly in a chloroplast respiratory chain. The immediate electron acceptor for the enzyme in this species is believed to be plastoquinone. Couples the redox reaction to proton translocation, and thus conserves the redox energy in a proton gradient. This chain is NAD(P)H-quinone oxidoreductase subunit 4L, chloroplastic, found in Physcomitrium patens (Spreading-leaved earth moss).